A 497-amino-acid polypeptide reads, in one-letter code: uncharacterized protein (497 aa).

The tract at residues 58–79 (ISTRSFRNDGNDSDPQTLDPDA) is disordered. 12 helical membrane passes run 86–106 (IAFV…ALPI), 120–140 (FSGL…YPML), 155–175 (FRPL…YSLA), 180–200 (WLYL…MFLY), 222–242 (LNIL…GLLA), 258–278 (VGSW…SIFF), 309–329 (FMLV…AGYQ), 348–368 (GNFL…STFL), 378–398 (MLYG…LDVL), 407–427 (FVLY…LISL), 438–458 (ILVG…GAIC), and 468–488 (VGFI…LLFL).

Belongs to the major facilitator superfamily.

The protein resides in the membrane. This is an uncharacterized protein from Schizosaccharomyces pombe (strain 972 / ATCC 24843) (Fission yeast).